A 375-amino-acid chain; its full sequence is 4-hydroxy-3-methylbut-2-en-1-yl diphosphate synthase (flavodoxin) (375 aa).

4 residues coordinate [4Fe-4S] cluster: Cys270, Cys273, Cys305, and Glu312.

The protein belongs to the IspG family. [4Fe-4S] cluster is required as a cofactor.

It carries out the reaction (2E)-4-hydroxy-3-methylbut-2-enyl diphosphate + oxidized [flavodoxin] + H2O + 2 H(+) = 2-C-methyl-D-erythritol 2,4-cyclic diphosphate + reduced [flavodoxin]. The protein operates within isoprenoid biosynthesis; isopentenyl diphosphate biosynthesis via DXP pathway; isopentenyl diphosphate from 1-deoxy-D-xylulose 5-phosphate: step 5/6. Its function is as follows. Converts 2C-methyl-D-erythritol 2,4-cyclodiphosphate (ME-2,4cPP) into 1-hydroxy-2-methyl-2-(E)-butenyl 4-diphosphate. The polypeptide is 4-hydroxy-3-methylbut-2-en-1-yl diphosphate synthase (flavodoxin) (Yersinia pestis (strain Pestoides F)).